The following is a 352-amino-acid chain: Probable dual-specificity RNA methyltransferase RlmN (352 aa).

Residue E93 is the Proton acceptor of the active site. The Radical SAM core domain maps to 99–332 (TAKRLTVCVS…ATVRQTRGLD (234 aa)). Residues C106 and C337 are joined by a disulfide bond. The [4Fe-4S] cluster site is built by C113, C117, and C120. S-adenosyl-L-methionine contacts are provided by residues 160 to 161 (GE), S190, 213 to 215 (SLH), and N294. C337 functions as the S-methylcysteine intermediate in the catalytic mechanism.

Belongs to the radical SAM superfamily. RlmN family. Requires [4Fe-4S] cluster as cofactor.

The protein resides in the cytoplasm. The enzyme catalyses adenosine(2503) in 23S rRNA + 2 reduced [2Fe-2S]-[ferredoxin] + 2 S-adenosyl-L-methionine = 2-methyladenosine(2503) in 23S rRNA + 5'-deoxyadenosine + L-methionine + 2 oxidized [2Fe-2S]-[ferredoxin] + S-adenosyl-L-homocysteine. The catalysed reaction is adenosine(37) in tRNA + 2 reduced [2Fe-2S]-[ferredoxin] + 2 S-adenosyl-L-methionine = 2-methyladenosine(37) in tRNA + 5'-deoxyadenosine + L-methionine + 2 oxidized [2Fe-2S]-[ferredoxin] + S-adenosyl-L-homocysteine. Its function is as follows. Specifically methylates position 2 of adenine 2503 in 23S rRNA and position 2 of adenine 37 in tRNAs. In Synechococcus sp. (strain JA-2-3B'a(2-13)) (Cyanobacteria bacterium Yellowstone B-Prime), this protein is Probable dual-specificity RNA methyltransferase RlmN.